The primary structure comprises 501 residues: Probable leucine aminopeptidase 2 (501 aa).

Residues 1 to 18 (MVTMKLLYLTSFASLAVA) form the signal peptide. Residues 119–216 (SPSVNATAPL…ADGQALIQMI (98 aa)) form the PA domain. N-linked (GlcNAc...) asparagine glycans are attached at residues asparagine 123 and asparagine 233. Residues histidine 257 and aspartate 269 each coordinate Zn(2+). Glutamate 301 functions as the Proton acceptor in the catalytic mechanism. Position 302 (glutamate 302) interacts with Zn(2+). An N-linked (GlcNAc...) asparagine glycan is attached at asparagine 316. Aspartate 330 contacts Zn(2+). The N-linked (GlcNAc...) asparagine glycan is linked to asparagine 350. Histidine 428 contributes to the Zn(2+) binding site. Asparagine 433 and asparagine 467 each carry an N-linked (GlcNAc...) asparagine glycan. The tract at residues 480–501 (AMKRTPHTHTGGTGCYKDRVEQ) is disordered.

This sequence belongs to the peptidase M28 family. M28A subfamily. Monomer. Zn(2+) is required as a cofactor.

Its subcellular location is the secreted. Extracellular aminopeptidase that releases a wide variety of amino acids from natural peptides and contributes to pathogenicity. This Aspergillus fumigatus (strain ATCC MYA-4609 / CBS 101355 / FGSC A1100 / Af293) (Neosartorya fumigata) protein is Probable leucine aminopeptidase 2 (lap2).